A 119-amino-acid polypeptide reads, in one-letter code: Small ribosomal subunit protein uS13 (119 aa).

The segment covering 94 to 113 (GLPVRGQRTKTNARTRKGPR) has biased composition (basic residues). The interval 94-119 (GLPVRGQRTKTNARTRKGPRKAIGAK) is disordered.

It belongs to the universal ribosomal protein uS13 family. In terms of assembly, part of the 30S ribosomal subunit. Forms a loose heterodimer with protein S19. Forms two bridges to the 50S subunit in the 70S ribosome.

In terms of biological role, located at the top of the head of the 30S subunit, it contacts several helices of the 16S rRNA. In the 70S ribosome it contacts the 23S rRNA (bridge B1a) and protein L5 of the 50S subunit (bridge B1b), connecting the 2 subunits; these bridges are implicated in subunit movement. Contacts the tRNAs in the A and P-sites. This chain is Small ribosomal subunit protein uS13, found in Nitrosomonas europaea (strain ATCC 19718 / CIP 103999 / KCTC 2705 / NBRC 14298).